The following is a 180-amino-acid chain: Major urinary protein 1 (180 aa).

The signal sequence occupies residues 1 to 18; that stretch reads MKMLLLLCLGLTLVCVHA. Cysteines 82 and 175 form a disulfide.

It belongs to the calycin superfamily. Lipocalin family. In terms of tissue distribution, abundant in the urine of adult male mice but absent from that of females.

Its subcellular location is the secreted. In terms of biological role, binds pheromones that are released from drying urine of males. These pheromones affect the sexual behavior of females. This Mus musculus (Mouse) protein is Major urinary protein 1 (Mup1).